A 51-amino-acid polypeptide reads, in one-letter code: Large ribosomal subunit protein eL39 (51 aa).

Belongs to the eukaryotic ribosomal protein eL39 family.

The protein is Large ribosomal subunit protein eL39 (RpL39) of Plutella xylostella (Diamondback moth).